The chain runs to 95 residues: Cell division topological specificity factor (95 aa).

This sequence belongs to the MinE family.

Functionally, prevents the cell division inhibition by proteins MinC and MinD at internal division sites while permitting inhibition at polar sites. This ensures cell division at the proper site by restricting the formation of a division septum at the midpoint of the long axis of the cell. In Psychrobacter cryohalolentis (strain ATCC BAA-1226 / DSM 17306 / VKM B-2378 / K5), this protein is Cell division topological specificity factor.